A 1381-amino-acid polypeptide reads, in one-letter code: Hepatocyte growth factor receptor (1381 aa).

Residues 1–24 (MKAPAVLVPGILVLLFTLVQRSNG) form the signal peptide. Residues 25–932 (ECKEALAKSE…VIVQPDQNFT (908 aa)) lie on the Extracellular side of the membrane. One can recognise a Sema domain in the interval 27–515 (KEALAKSEMN…TGKKITKIPL (489 aa)). Residue Asn45 is glycosylated (N-linked (GlcNAc...) asparagine). Intrachain disulfides connect Cys95/Cys101, Cys98/Cys160, Cys133/Cys141, and Cys172/Cys175. A glycan (N-linked (GlcNAc...) asparagine) is linked at Asn106. N-linked (GlcNAc...) asparagine glycosylation is present at Asn149. Asn202 carries N-linked (GlcNAc...) asparagine glycosylation. Disulfide bonds link Cys298–Cys363 and Cys385–Cys397. Asn399 and Asn405 each carry an N-linked (GlcNAc...) asparagine glycan. Disulfide bonds link Cys520-Cys538, Cys526-Cys561, Cys529-Cys545, and Cys541-Cys551. IPT/TIG domains are found at residues 563–655 (PAIY…FSYV), 657–739 (PIIT…FSYR), and 742–836 (PIVY…LIYV). The O-linked (Man) threonine glycan is linked to Thr582. N-linked (GlcNAc...) asparagine glycans are attached at residues Asn607 and Asn635. O-linked (Man) threonine glycosylation is found at Thr676 and Thr761. Asn785, Asn879, and Asn930 each carry an N-linked (GlcNAc...) asparagine glycan. Residues 933 to 955 (GLIAGVVSISIALLLLLGLFLWL) form a helical membrane-spanning segment. Residues 956-1381 (KKRKQIKDLG…EDNADDEVDT (426 aa)) are Cytoplasmic-facing. At Ser966 the chain carries Phosphoserine. Thr977 is subject to Phosphothreonine. 3 positions are modified to phosphoserine: Ser990, Ser997, and Ser1000. Tyr1003 carries the post-translational modification Phosphotyrosine. In terms of domain architecture, Protein kinase spans 1078 to 1345 (VHFNEVIGRG…RISAIFSTFI (268 aa)). ATP is bound by residues 1084–1092 (IGRGHFGCV) and Lys1110. Asp1204 functions as the Proton acceptor in the catalytic mechanism. The interaction with RANBP9 stretch occupies residues 1212 to 1381 (LDEKFTVKVA…EDNADDEVDT (170 aa)). Tyr1230 carries the post-translational modification Phosphotyrosine. A phosphotyrosine; by autocatalysis mark is found at Tyr1234 and Tyr1235. Phosphothreonine is present on Thr1289. The tract at residues 1320–1359 (WHPKAEMRPSFSELVSRISAIFSTFIGEHYVHVNATYVNV) is interaction with MUC20. Phosphotyrosine; by autocatalysis occurs at positions 1349 and 1356. Phosphotyrosine is present on Tyr1365.

The protein belongs to the protein kinase superfamily. Tyr protein kinase family. As to quaternary structure, heterodimer made of an alpha chain (50 kDa) and a beta chain (145 kDa) which are disulfide linked. Binds PLXNB1. Interacts when phosphorylated with downstream effectors including STAT3, PIK3R1, SRC, PCLG1, GRB2 and GAB1. Interacts with SPSB1, SPSB2 and SPSB4. Interacts with INPP5D/SHIP1. When phosphorylated at Tyr-1356, interacts with INPPL1/SHIP2. Interacts with RANBP9 and RANBP10, as well as SPSB1, SPSB2, SPSB3 and SPSB4. SPSB1 binding occurs in the presence and in the absence of HGF, however HGF treatment has a positive effect on this interaction. Interacts with MUC20; prevents interaction with GRB2 and suppresses hepatocyte growth factor-induced cell proliferation. Interacts with GRB10. Interacts with PTPN1 and PTPN2. Interacts with HSP90AA1 and HSP90AB1; the interaction suppresses MET kinase activity. Interacts with tensin TNS3. Interacts (when phosphorylated) with tensin TNS4 (via SH2 domain); the interaction increases MET protein stability by inhibiting MET endocytosis and subsequent lysosomal degradation. Post-translationally, autophosphorylated in response to ligand binding on Tyr-1234 and Tyr-1235 in the kinase domain leading to further phosphorylation of Tyr-1349 and Tyr-1356 in the C-terminal multifunctional docking site. Dephosphorylated by PTPRJ at Tyr-1349 and Tyr-1365. Dephosphorylated by PTPN1 and PTPN2. In terms of processing, ubiquitinated. Ubiquitination by CBL regulates the receptor stability and activity through proteasomal degradation. O-mannosylation of IPT/TIG domains by TMEM260 is required for protein maturation. O-mannosylated residues are composed of single mannose glycans that are not elongated or modified.

The protein resides in the membrane. The catalysed reaction is L-tyrosyl-[protein] + ATP = O-phospho-L-tyrosyl-[protein] + ADP + H(+). With respect to regulation, in its inactive state, the C-terminal tail interacts with the catalytic domain and inhibits the kinase activity. Upon ligand binding, the C-terminal tail is displaced and becomes phosphorylated, thus increasing the kinase activity. Its function is as follows. Receptor tyrosine kinase that transduces signals from the extracellular matrix into the cytoplasm by binding to hepatocyte growth factor/HGF ligand. Regulates many physiological processes including proliferation, scattering, morphogenesis and survival. Ligand binding at the cell surface induces autophosphorylation of MET on its intracellular domain that provides docking sites for downstream signaling molecules. Following activation by ligand, interacts with the PI3-kinase subunit PIK3R1, PLCG1, SRC, GRB2, STAT3 or the adapter GAB1. Recruitment of these downstream effectors by MET leads to the activation of several signaling cascades including the RAS-ERK, PI3 kinase-AKT, or PLCgamma-PKC. The RAS-ERK activation is associated with the morphogenetic effects while PI3K/AKT coordinates prosurvival effects. During embryonic development, MET signaling plays a role in gastrulation, development and migration of muscles and neuronal precursors, angiogenesis and kidney formation. In adults, participates in wound healing as well as organ regeneration and tissue remodeling. Also promotes differentiation and proliferation of hematopoietic cells. The protein is Hepatocyte growth factor receptor (MET) of Papio anubis (Olive baboon).